The primary structure comprises 558 residues: Glucose-6-phosphate isomerase (558 aa).

Position 2 is an N-acetylalanine (A2). K12 bears the N6-acetyllysine mark. N6-(2-hydroxyisobutyryl)lysine is present on K34. A Phosphoserine modification is found at S107. T109 carries the phosphothreonine modification. N6-acetyllysine is present on K142. G159–S160 is a binding site for D-glucose 6-phosphate. S185 carries the phosphoserine; by CK2 modification. S210–T215 is a binding site for D-glucose 6-phosphate. T250 is modified (phosphothreonine). 3 residues coordinate D-glucose 6-phosphate: Q354, E358, and H389. E358 acts as the Proton donor in catalysis. Residue H389 is part of the active site. N6-acetyllysine; alternate is present on K454. K454 bears the N6-malonyllysine; alternate mark. Position 454 is an N6-succinyllysine; alternate (K454). S455 is modified (phosphoserine). K519 lines the D-glucose 6-phosphate pocket. K519 is an active-site residue.

This sequence belongs to the GPI family. Homodimer; in the catalytically active form. Monomer in the secreted form. Post-translationally, phosphorylation at Ser-185 by CK2 has been shown to decrease enzymatic activity and may contribute to secretion by a non-classical secretory pathway. ISGylated.

It localises to the cytoplasm. It is found in the secreted. It catalyses the reaction alpha-D-glucose 6-phosphate = beta-D-fructose 6-phosphate. It functions in the pathway carbohydrate degradation; glycolysis; D-glyceraldehyde 3-phosphate and glycerone phosphate from D-glucose: step 2/4. Strongly inhibited by erythrose 4-phosphate. Its function is as follows. In the cytoplasm, catalyzes the conversion of glucose-6-phosphate to fructose-6-phosphate, the second step in glycolysis, and the reverse reaction during gluconeogenesis. Besides it's role as a glycolytic enzyme, also acts as a secreted cytokine: acts as an angiogenic factor (AMF) that stimulates endothelial cell motility. Acts as a neurotrophic factor, neuroleukin, for spinal and sensory neurons. It is secreted by lectin-stimulated T-cells and induces immunoglobulin secretion. This Homo sapiens (Human) protein is Glucose-6-phosphate isomerase.